Reading from the N-terminus, the 514-residue chain is Major facilitator superfamily domain-containing protein 4A (514 aa).

5 helical membrane passes run Leu19 to Leu39, Ile53 to Val73, Leu82 to Cys102, Val107 to Asn127, and Ala139 to Ile159. N-linked (GlcNAc...) asparagine glycosylation is present at Asn177. 7 helical membrane-spanning segments follow: residues Tyr221–Leu241, Phe307–Ala327, Val347–Ile367, Ala376–Phe396, Val400–Ser420, Val438–Phe458, and Phe466–Phe486.

The protein belongs to the major facilitator superfamily.

The protein resides in the membrane. This chain is Major facilitator superfamily domain-containing protein 4A, found in Homo sapiens (Human).